We begin with the raw amino-acid sequence, 236 residues long: Glucosamine-6-phosphate deaminase (236 aa).

The Proton acceptor; for enolization step role is filled by D62. The For ring-opening step role is filled by N128. The Proton acceptor; for ring-opening step role is filled by H130. Catalysis depends on E135, which acts as the For ring-opening step.

It belongs to the glucosamine/galactosamine-6-phosphate isomerase family. NagB subfamily.

It carries out the reaction alpha-D-glucosamine 6-phosphate + H2O = beta-D-fructose 6-phosphate + NH4(+). The protein operates within amino-sugar metabolism; N-acetylneuraminate degradation; D-fructose 6-phosphate from N-acetylneuraminate: step 5/5. Its function is as follows. Catalyzes the reversible isomerization-deamination of glucosamine 6-phosphate (GlcN6P) to form fructose 6-phosphate (Fru6P) and ammonium ion. This chain is Glucosamine-6-phosphate deaminase, found in Oenococcus oeni (strain ATCC BAA-331 / PSU-1).